We begin with the raw amino-acid sequence, 181 residues long: Alkyl hydroperoxide reductase AhpD (181 aa).

Cysteine 131 serves as the catalytic Proton donor. Cysteine 131 and cysteine 134 are joined by a disulfide. Catalysis depends on cysteine 134, which acts as the Cysteine sulfenic acid (-SOH) intermediate.

Belongs to the AhpD family.

The catalysed reaction is N(6)-[(R)-dihydrolipoyl]-L-lysyl-[lipoyl-carrier protein] + a hydroperoxide = N(6)-[(R)-lipoyl]-L-lysyl-[lipoyl-carrier protein] + an alcohol + H2O. In terms of biological role, antioxidant protein with alkyl hydroperoxidase activity. Required for the reduction of the AhpC active site cysteine residues and for the regeneration of the AhpC enzyme activity. The sequence is that of Alkyl hydroperoxide reductase AhpD from Bradyrhizobium sp. (strain BTAi1 / ATCC BAA-1182).